The sequence spans 448 residues: Homogentisate 1,2-dioxygenase (448 aa).

H303 functions as the Proton acceptor in the catalytic mechanism. Residues H346 and E352 each contribute to the Fe cation site. Positions 361 and 382 each coordinate homogentisate. H382 is a Fe cation binding site.

It belongs to the homogentisate dioxygenase family. In terms of assembly, hexamer; dimer of trimers. Fe cation serves as cofactor.

It catalyses the reaction homogentisate + O2 = 4-maleylacetoacetate + H(+). It participates in amino-acid degradation; L-phenylalanine degradation; acetoacetate and fumarate from L-phenylalanine: step 4/6. In terms of biological role, involved in the catabolism of homogentisate (2,5-dihydroxyphenylacetate or 2,5-OH-PhAc), a central intermediate in the degradation of phenylalanine and tyrosine. Catalyzes the oxidative ring cleavage of the aromatic ring of homogentisate to yield maleylacetoacetate. The protein is Homogentisate 1,2-dioxygenase of Rhodopseudomonas palustris (strain TIE-1).